The following is a 29-amino-acid chain: Chassatide C10 (29 aa).

A cross-link (cyclopeptide (Gly-Asn)) is located at residues 1–29; that stretch reads GEYCGESCYLIPCFTPGCYCVSRQCVNKN. 3 cysteine pairs are disulfide-bonded: cysteine 4-cysteine 18, cysteine 8-cysteine 20, and cysteine 13-cysteine 25.

Post-translationally, this is a cyclic peptide.

In terms of biological role, probably participates in a plant defense mechanism. Has no activity against bacteria up to a concentration of 80 uM. Has cytotoxic but no hemolytic activity. The protein is Chassatide C10 of Chassalia chartacea (Chassalia curviflora).